Here is a 461-residue protein sequence, read N- to C-terminus: Argininosuccinate lyase (461 aa).

Belongs to the lyase 1 family. Argininosuccinate lyase subfamily.

It is found in the cytoplasm. The enzyme catalyses 2-(N(omega)-L-arginino)succinate = fumarate + L-arginine. The protein operates within amino-acid biosynthesis; L-arginine biosynthesis; L-arginine from L-ornithine and carbamoyl phosphate: step 3/3. The protein is Argininosuccinate lyase of Desulfitobacterium hafniense (strain DSM 10664 / DCB-2).